A 493-amino-acid polypeptide reads, in one-letter code: L-arabinose isomerase 1 (493 aa).

The Mn(2+) site is built by Glu301, Glu326, His343, and His442.

This sequence belongs to the arabinose isomerase family. The cofactor is Mn(2+).

The catalysed reaction is beta-L-arabinopyranose = L-ribulose. Its pathway is carbohydrate degradation; L-arabinose degradation via L-ribulose; D-xylulose 5-phosphate from L-arabinose (bacterial route): step 1/3. In terms of biological role, catalyzes the conversion of L-arabinose to L-ribulose. The protein is L-arabinose isomerase 1 of Bacillus licheniformis (strain ATCC 14580 / DSM 13 / JCM 2505 / CCUG 7422 / NBRC 12200 / NCIMB 9375 / NCTC 10341 / NRRL NRS-1264 / Gibson 46).